Reading from the N-terminus, the 87-residue chain is DNA-directed RNA polymerase subunit Rpo5 (87 aa).

It belongs to the archaeal Rpo5/eukaryotic RPB5 RNA polymerase subunit family. Part of the RNA polymerase complex.

The protein localises to the cytoplasm. The enzyme catalyses RNA(n) + a ribonucleoside 5'-triphosphate = RNA(n+1) + diphosphate. DNA-dependent RNA polymerase (RNAP) catalyzes the transcription of DNA into RNA using the four ribonucleoside triphosphates as substrates. In Thermoplasma acidophilum (strain ATCC 25905 / DSM 1728 / JCM 9062 / NBRC 15155 / AMRC-C165), this protein is DNA-directed RNA polymerase subunit Rpo5.